Here is a 382-residue protein sequence, read N- to C-terminus: MKITRLHTYRVAPRWMFLKIETDEGISGWGEPVIEGRARTVEAAVHEFGETLIGKDPARINDLWQTMYRSNFYRGGAILMSAIAGIDQALWDIKGKALGVPVYELLGGRVRDRMKVYSWVGGDRPADIVQDMQRLLEGGIDTFKLNGCEEMALLDSPRAVDAAVAKVAAVRDALDMRVDFGLDFHGRVAAPMAKPLLRALEPLRPLFVEEPVLAEQAEHYPRLAASTSIPLAAGERMYSRFEFKRVLEEGGLAILQPDLSHAGGITECHKIAAMAEAYDVAFAPHCPLGPVALAACLQVDFVAHNAVLQEQSMGIHYNRGAELLDYVINKDDFRIDAGFIRALPKPGLGVEVDEERIVHASRNPPDWRNPVWRHADGSVAEW.

Position 183 (aspartate 183) interacts with Mg(2+). Catalysis depends on histidine 185, which acts as the Proton donor. Mg(2+) contacts are provided by glutamate 209 and glutamate 235. Histidine 285 serves as the catalytic Proton acceptor.

It belongs to the mandelate racemase/muconate lactonizing enzyme family. GalD subfamily. Mg(2+) is required as a cofactor.

The catalysed reaction is D-galactonate = 2-dehydro-3-deoxy-D-galactonate + H2O. The protein operates within carbohydrate acid metabolism; D-galactonate degradation; D-glyceraldehyde 3-phosphate and pyruvate from D-galactonate: step 1/3. Its function is as follows. Catalyzes the dehydration of D-galactonate to 2-keto-3-deoxy-D-galactonate. The polypeptide is D-galactonate dehydratase (Variovorax paradoxus (strain S110)).